Reading from the N-terminus, the 542-residue chain is CTP synthase (542 aa).

An amidoligase domain region spans residues 1-265; it reads MARYVFITGG…DSEVLSAFGI (265 aa). Serine 13 serves as a coordination point for CTP. Serine 13 is a binding site for UTP. 14–19 is an ATP binding site; the sequence is SLGKGI. Tyrosine 54 is a binding site for L-glutamine. Aspartate 71 serves as a coordination point for ATP. Residues aspartate 71 and glutamate 139 each contribute to the Mg(2+) site. Residues 146-148, 186-191, and lysine 222 contribute to the CTP site; these read DIE and KTKPTQ. UTP is bound by residues 186-191 and lysine 222; that span reads KTKPTQ. The Glutamine amidotransferase type-1 domain occupies 291-541; it reads TIAVVGKYTG…IEAAIEQSRL (251 aa). Glycine 353 is a binding site for L-glutamine. The active-site Nucleophile; for glutamine hydrolysis is the cysteine 380. L-glutamine is bound by residues 381–384, glutamate 404, and arginine 469; that span reads FGMQ. Residues histidine 514 and glutamate 516 contribute to the active site.

Belongs to the CTP synthase family. As to quaternary structure, homotetramer.

It carries out the reaction UTP + L-glutamine + ATP + H2O = CTP + L-glutamate + ADP + phosphate + 2 H(+). The catalysed reaction is L-glutamine + H2O = L-glutamate + NH4(+). The enzyme catalyses UTP + NH4(+) + ATP = CTP + ADP + phosphate + 2 H(+). It functions in the pathway pyrimidine metabolism; CTP biosynthesis via de novo pathway; CTP from UDP: step 2/2. With respect to regulation, allosterically activated by GTP, when glutamine is the substrate; GTP has no effect on the reaction when ammonia is the substrate. The allosteric effector GTP functions by stabilizing the protein conformation that binds the tetrahedral intermediate(s) formed during glutamine hydrolysis. Inhibited by the product CTP, via allosteric rather than competitive inhibition. Its function is as follows. Catalyzes the ATP-dependent amination of UTP to CTP with either L-glutamine or ammonia as the source of nitrogen. Regulates intracellular CTP levels through interactions with the four ribonucleotide triphosphates. The polypeptide is CTP synthase (Brucella melitensis biotype 1 (strain ATCC 23456 / CCUG 17765 / NCTC 10094 / 16M)).